Reading from the N-terminus, the 309-residue chain is Olfactory receptor 8B4 (309 aa).

The Extracellular segment spans residues 1 to 25 (MTLRNSSSVTEFILVGLSEQPELQL). N5 is a glycosylation site (N-linked (GlcNAc...) asparagine). The chain crosses the membrane as a helical span at residues 26 to 46 (PLFLLFLGIYVFTVVGNLGLI). Residues 47–54 (TLIGINPS) are Cytoplasmic-facing. A helical transmembrane segment spans residues 55-75 (LHTPMYFFLFNLSFIDLCYSC). At 76 to 98 (VFTPKMLNDFVSESIISYVGCMT) the chain is on the extracellular side. A disulfide bridge connects residues C96 and C188. The chain crosses the membrane as a helical span at residues 99–119 (QLFFFCFFVNSECYVLVSMAY). Residues 120–138 (DRYVAICNPLLYMVTMSPR) are Cytoplasmic-facing. Residues 139-159 (VCFLLMFGSYVVGFAGAMAHT) traverse the membrane as a helical segment. Topologically, residues 160 to 196 (GSMLRLTFCDSNVIDHYLCDVLPLLQLSCTSTHVSEL) are extracellular. The chain crosses the membrane as a helical span at residues 197–216 (VFFIVVGVITMLSSISIVIS). At 217–236 (YALILSNILCIPSAEGRSKA) the chain is on the cytoplasmic side. Residues 237 to 257 (FSTWGSHIIAVALFFGSGTFT) traverse the membrane as a helical segment. Topologically, residues 258-270 (YLTTSFPGSMNHG) are extracellular. Residues 271–291 (RFASVFYTNVVPMLNPSIYSL) traverse the membrane as a helical segment. Topologically, residues 292-309 (RNKDDKLALGKTLKRVLF) are cytoplasmic.

The protein belongs to the G-protein coupled receptor 1 family.

It is found in the cell membrane. In terms of biological role, odorant receptor. In Homo sapiens (Human), this protein is Olfactory receptor 8B4 (OR8B4).